The primary structure comprises 399 residues: Argininosuccinate synthase (399 aa).

Residues 10–18 and alanine 38 each bind ATP; that span reads AYSGGVDTS. Tyrosine 89 contacts L-citrulline. Glycine 119 is a binding site for ATP. L-aspartate contacts are provided by threonine 121, asparagine 125, and aspartate 126. L-citrulline is bound at residue asparagine 125. Residues arginine 129, serine 177, serine 186, glutamate 262, and tyrosine 274 each contribute to the L-citrulline site.

It belongs to the argininosuccinate synthase family. Type 1 subfamily. In terms of assembly, homotetramer.

The protein resides in the cytoplasm. It catalyses the reaction L-citrulline + L-aspartate + ATP = 2-(N(omega)-L-arginino)succinate + AMP + diphosphate + H(+). Its pathway is amino-acid biosynthesis; L-arginine biosynthesis; L-arginine from L-ornithine and carbamoyl phosphate: step 2/3. The protein is Argininosuccinate synthase of Acaryochloris marina (strain MBIC 11017).